The primary structure comprises 199 residues: ATP-dependent Clp protease proteolytic subunit (199 aa).

Residue Ser98 is the Nucleophile of the active site. Residue His123 is part of the active site.

It belongs to the peptidase S14 family. In terms of assembly, fourteen ClpP subunits assemble into 2 heptameric rings which stack back to back to give a disk-like structure with a central cavity, resembling the structure of eukaryotic proteasomes.

Its subcellular location is the cytoplasm. It carries out the reaction Hydrolysis of proteins to small peptides in the presence of ATP and magnesium. alpha-casein is the usual test substrate. In the absence of ATP, only oligopeptides shorter than five residues are hydrolyzed (such as succinyl-Leu-Tyr-|-NHMec, and Leu-Tyr-Leu-|-Tyr-Trp, in which cleavage of the -Tyr-|-Leu- and -Tyr-|-Trp bonds also occurs).. Cleaves peptides in various proteins in a process that requires ATP hydrolysis. Has a chymotrypsin-like activity. Plays a major role in the degradation of misfolded proteins. The polypeptide is ATP-dependent Clp protease proteolytic subunit (Clostridium botulinum (strain Alaska E43 / Type E3)).